Here is a 240-residue protein sequence, read N- to C-terminus: Uridylate kinase (240 aa).

13-16 (KASG) is an ATP binding site. The involved in allosteric activation by GTP stretch occupies residues 21–26 (GSQGFG). Gly-55 contributes to the UMP binding site. ATP is bound by residues Gly-56 and Arg-60. Residues Asp-75 and 136–143 (TGNPFFTT) each bind UMP. Positions 163, 164, 169, and 172 each coordinate ATP.

It belongs to the UMP kinase family. Homohexamer.

The protein localises to the cytoplasm. The enzyme catalyses UMP + ATP = UDP + ADP. Its pathway is pyrimidine metabolism; CTP biosynthesis via de novo pathway; UDP from UMP (UMPK route): step 1/1. Allosterically activated by GTP. Inhibited by UTP. Catalyzes the reversible phosphorylation of UMP to UDP. This is Uridylate kinase from Brucella anthropi (strain ATCC 49188 / DSM 6882 / CCUG 24695 / JCM 21032 / LMG 3331 / NBRC 15819 / NCTC 12168 / Alc 37) (Ochrobactrum anthropi).